The sequence spans 306 residues: Acetyl-coenzyme A carboxylase carboxyl transferase subunit beta (306 aa).

Positions 25–294 (LWIKDPTSGE…VVTPSPPSPT (270 aa)) constitute a CoA carboxyltransferase N-terminal domain. The interval 284 to 306 (AVVTPSPPSPTDSQTSLSKTKAA) is disordered.

Belongs to the AccD/PCCB family. Acetyl-CoA carboxylase is a heterohexamer composed of biotin carboxyl carrier protein (AccB), biotin carboxylase (AccC) and two subunits each of ACCase subunit alpha (AccA) and ACCase subunit beta (AccD).

The protein resides in the cytoplasm. It catalyses the reaction N(6)-carboxybiotinyl-L-lysyl-[protein] + acetyl-CoA = N(6)-biotinyl-L-lysyl-[protein] + malonyl-CoA. It functions in the pathway lipid metabolism; malonyl-CoA biosynthesis; malonyl-CoA from acetyl-CoA: step 1/1. Component of the acetyl coenzyme A carboxylase (ACC) complex. Biotin carboxylase (BC) catalyzes the carboxylation of biotin on its carrier protein (BCCP) and then the CO(2) group is transferred by the transcarboxylase to acetyl-CoA to form malonyl-CoA. The polypeptide is Acetyl-coenzyme A carboxylase carboxyl transferase subunit beta (Bartonella tribocorum (strain CIP 105476 / IBS 506)).